The chain runs to 122 residues: Serum amyloid A-1 protein (122 aa).

Positions 1–18 are cleaved as a signal peptide; it reads MKLLTGLVFCSLVLGVSS. Residues 19–45 are important for amyloid formation; forms amyloid fibrils in vitro; the sequence is RSFFSFLGEAFDGARDMWRAYSDMREA. Positions 95-122 are cleaved as a propeptide — often cleaved during amyloidogenesis; sequence LADQAANEWGRSGKDPNHFRPAGLPEKY. Positions 98–122 are disordered; that stretch reads QAANEWGRSGKDPNHFRPAGLPEKY. Asparagine 101 carries the post-translational modification N4,N4-dimethylasparagine.

The protein belongs to the SAA family. As to quaternary structure, homohexamer; dimer of trimers. Can form amyloid fibrils after partial proteolysis; the native, undenatured protein does not form amyloid fibrils (in vitro). Apolipoprotein of the HDL complex. Binds to heparin. In terms of processing, this protein is the precursor of amyloid protein A, which is formed by the removal of approximately 24 residues from the C-terminal end. Expressed by the liver; secreted in plasma (at protein level).

The protein localises to the secreted. Functionally, major acute phase protein. This Homo sapiens (Human) protein is Serum amyloid A-1 protein (SAA1).